Consider the following 1272-residue polypeptide: Myosin-3 (1272 aa).

Residues 1 to 20 (MAVIKKGARRKDVKEPKKRS) form a disordered region. Residues 36–715 (VGISDLTLLS…SLFALEDMRD (680 aa)) form the Myosin motor domain. Residue 129–136 (GESGAGKT) coordinates ATP. The residue at position 357 (S357) is a Phosphoserine. Residues 588–610 (ANELVETLSKAEPSYIRTIKPNQ) are actin-binding. 2 consecutive IQ domains span residues 719 to 739 (YNMAARIQRAWRRFLQRRIDA) and 740 to 765 (AIKIQRTIREKKGGNKYVKLRDYGTK). The region spanning 771–961 (KERRSMSLLG…TIYVRRGHPA (191 aa)) is the TH1 domain. 3 disordered regions span residues 951–1015 (STIY…QKPV), 1029–1141 (YNPK…SELP), and 1217–1272 (VQFG…DDDW). The segment covering 980–1000 (IKSKKSKHKSTHKHTHSHRSH) has biased composition (basic residues). Residues 1066-1078 (KKASSSHKSSSAK) show a composition bias toward low complexity. Over residues 1089 to 1098 (GVEKNKEPLK) the composition is skewed to basic and acidic residues. A compositionally biased stretch (pro residues) spans 1109–1118 (PIPPPPPPMG). One can recognise an SH3 domain in the interval 1120 to 1182 (PKDPKFEAAY…PTAYMTPYKD (63 aa)). Over residues 1217–1236 (VQFGSATVGPTSDNQSNPVG) the composition is skewed to polar residues. The segment covering 1258-1272 (ADDDDNDDGDDDDDW) has biased composition (acidic residues).

Belongs to the TRAFAC class myosin-kinesin ATPase superfamily. Myosin family. As to quaternary structure, interacts (via myosin motor domain) with SHE4; this interaction is important for proper localization and may regulate the interaction of the motor domain with actin. Interacts (via SH3 domain) with VRP1; this interaction is required for localization to sites of polarized growth and may regulate the interaction of the tail domain with actin. Interacts (via SH3 domain) with PAN1; this interaction is important for late stages of endocytopsis. Interacts (via SH3 domain) with BBC1 and LAS17. Interacts (via C-terminal acidic tail) with ARC19 and ARC40; ARC19 and ARC40 are Arp2/3 complex subunits. Phosphorylation of the TEDS site (Ser-357) is required for the polarization of the actin cytoskeleton and for ligand-induced, but not for constitutive internalization of STE2. Phosphorylation probably activates the myosin-I ATPase. Ser-357 is phosphorylated by CLA4 and STE20 in vitro.

Its subcellular location is the cytoplasm. The protein localises to the cytoskeleton. It is found in the actin patch. In terms of biological role, one of two redundant type-I myosins implicated in the organization of the actin cytoskeleton. Required for proper actin cytoskeleton polarization and for the internalization step in endocytosis. At the cell cortex, assembles in patch-like structures together with proteins from the actin-polymerizing machinery and promotes actin assembly. Functions redundantly with LAS17 as actin nucleation-promoting factor (NPF) for the Arp2/3 complex. Motor domain phosphorylation by PAK kinases CLA4 and STE20 promotes CDC42-regulated actin assembly. Functions together with the NPF PAN1 in late stages of endocytosis. Motor domain phosphorylation by PDK1 kinases PKH1 and PKH2, and by SGK kinases YPK1 and YPK2, promotes ligand-induced, but not constitutive endocytosis of the G protein-coupled receptor STE2. The protein is Myosin-3 (MYO3) of Saccharomyces cerevisiae (strain ATCC 204508 / S288c) (Baker's yeast).